We begin with the raw amino-acid sequence, 735 residues long: Phosphoribosylformylglycinamidine synthase subunit PurL (735 aa).

Residue histidine 49 is part of the active site. The ATP site is built by tyrosine 52 and lysine 91. Glutamate 93 contacts Mg(2+). Substrate-binding positions include 94–97 (SHNH) and arginine 116. The active-site Proton acceptor is the histidine 95. Residue aspartate 117 participates in Mg(2+) binding. Glutamine 240 contributes to the substrate binding site. Aspartate 268 serves as a coordination point for Mg(2+). Position 312 to 314 (312 to 314 (ESQ)) interacts with substrate. ATP is bound by residues aspartate 493 and glycine 530. Asparagine 531 is a Mg(2+) binding site. Serine 533 is a binding site for substrate.

This sequence belongs to the FGAMS family. In terms of assembly, monomer. Part of the FGAM synthase complex composed of 1 PurL, 1 PurQ and 2 PurS subunits.

The protein resides in the cytoplasm. The catalysed reaction is N(2)-formyl-N(1)-(5-phospho-beta-D-ribosyl)glycinamide + L-glutamine + ATP + H2O = 2-formamido-N(1)-(5-O-phospho-beta-D-ribosyl)acetamidine + L-glutamate + ADP + phosphate + H(+). The protein operates within purine metabolism; IMP biosynthesis via de novo pathway; 5-amino-1-(5-phospho-D-ribosyl)imidazole from N(2)-formyl-N(1)-(5-phospho-D-ribosyl)glycinamide: step 1/2. Part of the phosphoribosylformylglycinamidine synthase complex involved in the purines biosynthetic pathway. Catalyzes the ATP-dependent conversion of formylglycinamide ribonucleotide (FGAR) and glutamine to yield formylglycinamidine ribonucleotide (FGAM) and glutamate. The FGAM synthase complex is composed of three subunits. PurQ produces an ammonia molecule by converting glutamine to glutamate. PurL transfers the ammonia molecule to FGAR to form FGAM in an ATP-dependent manner. PurS interacts with PurQ and PurL and is thought to assist in the transfer of the ammonia molecule from PurQ to PurL. This is Phosphoribosylformylglycinamidine synthase subunit PurL from Azorhizobium caulinodans (strain ATCC 43989 / DSM 5975 / JCM 20966 / LMG 6465 / NBRC 14845 / NCIMB 13405 / ORS 571).